Here is a 156-residue protein sequence, read N- to C-terminus: Small ribosomal subunit protein uS7 (156 aa).

It belongs to the universal ribosomal protein uS7 family. In terms of assembly, part of the 30S ribosomal subunit. Contacts proteins S9 and S11.

One of the primary rRNA binding proteins, it binds directly to 16S rRNA where it nucleates assembly of the head domain of the 30S subunit. Is located at the subunit interface close to the decoding center, probably blocks exit of the E-site tRNA. The polypeptide is Small ribosomal subunit protein uS7 (Aeromonas hydrophila subsp. hydrophila (strain ATCC 7966 / DSM 30187 / BCRC 13018 / CCUG 14551 / JCM 1027 / KCTC 2358 / NCIMB 9240 / NCTC 8049)).